Here is a 271-residue protein sequence, read N- to C-terminus: Thiazole synthase (271 aa).

The active-site Schiff-base intermediate with DXP is Lys-104. 1-deoxy-D-xylulose 5-phosphate contacts are provided by residues Gly-165, Ala-192–Gly-193, and Asn-214–Thr-215.

It belongs to the ThiG family. In terms of assembly, homotetramer. Forms heterodimers with either ThiH or ThiS.

It localises to the cytoplasm. It catalyses the reaction [ThiS sulfur-carrier protein]-C-terminal-Gly-aminoethanethioate + 2-iminoacetate + 1-deoxy-D-xylulose 5-phosphate = [ThiS sulfur-carrier protein]-C-terminal Gly-Gly + 2-[(2R,5Z)-2-carboxy-4-methylthiazol-5(2H)-ylidene]ethyl phosphate + 2 H2O + H(+). It participates in cofactor biosynthesis; thiamine diphosphate biosynthesis. Its function is as follows. Catalyzes the rearrangement of 1-deoxy-D-xylulose 5-phosphate (DXP) to produce the thiazole phosphate moiety of thiamine. Sulfur is provided by the thiocarboxylate moiety of the carrier protein ThiS. In vitro, sulfur can be provided by H(2)S. The polypeptide is Thiazole synthase (Burkholderia thailandensis (strain ATCC 700388 / DSM 13276 / CCUG 48851 / CIP 106301 / E264)).